The sequence spans 119 residues: Large ribosomal subunit protein bL20 (119 aa).

The protein belongs to the bacterial ribosomal protein bL20 family.

Binds directly to 23S ribosomal RNA and is necessary for the in vitro assembly process of the 50S ribosomal subunit. It is not involved in the protein synthesizing functions of that subunit. This chain is Large ribosomal subunit protein bL20 (rplT), found in Geobacillus stearothermophilus (Bacillus stearothermophilus).